A 511-amino-acid chain; its full sequence is Maturase K (511 aa).

It belongs to the intron maturase 2 family. MatK subfamily.

The protein localises to the plastid. It localises to the chloroplast. Its function is as follows. Usually encoded in the trnK tRNA gene intron. Probably assists in splicing its own and other chloroplast group II introns. The polypeptide is Maturase K (Bromus inermis (Smooth brome grass)).